The sequence spans 482 residues: tRNA sulfurtransferase (482 aa).

Residues 61–165 (EAIRDALTRI…QDRLLLIKSR (105 aa)) enclose the THUMP domain. Residues 183 to 184 (LI), Lys-265, Gly-287, and Gln-296 contribute to the ATP site. Cys-344 and Cys-456 are oxidised to a cystine. The Rhodanese domain occupies 404–482 (FVPTDVLLDI…GFSNVKVYRP (79 aa)). Cys-456 functions as the Cysteine persulfide intermediate in the catalytic mechanism.

Belongs to the ThiI family.

It is found in the cytoplasm. It catalyses the reaction [ThiI sulfur-carrier protein]-S-sulfanyl-L-cysteine + a uridine in tRNA + 2 reduced [2Fe-2S]-[ferredoxin] + ATP + H(+) = [ThiI sulfur-carrier protein]-L-cysteine + a 4-thiouridine in tRNA + 2 oxidized [2Fe-2S]-[ferredoxin] + AMP + diphosphate. The enzyme catalyses [ThiS sulfur-carrier protein]-C-terminal Gly-Gly-AMP + S-sulfanyl-L-cysteinyl-[cysteine desulfurase] + AH2 = [ThiS sulfur-carrier protein]-C-terminal-Gly-aminoethanethioate + L-cysteinyl-[cysteine desulfurase] + A + AMP + 2 H(+). It functions in the pathway cofactor biosynthesis; thiamine diphosphate biosynthesis. Catalyzes the ATP-dependent transfer of a sulfur to tRNA to produce 4-thiouridine in position 8 of tRNAs, which functions as a near-UV photosensor. Also catalyzes the transfer of sulfur to the sulfur carrier protein ThiS, forming ThiS-thiocarboxylate. This is a step in the synthesis of thiazole, in the thiamine biosynthesis pathway. The sulfur is donated as persulfide by IscS. This is tRNA sulfurtransferase from Pectobacterium atrosepticum (strain SCRI 1043 / ATCC BAA-672) (Erwinia carotovora subsp. atroseptica).